A 109-amino-acid polypeptide reads, in one-letter code: Cell division protein ZapA (109 aa).

Residues 21 to 99 (PEQRDALNQA…IEQALLEQGR (79 aa)) adopt a coiled-coil conformation.

Belongs to the ZapA family. Type 1 subfamily. Homodimer. Interacts with FtsZ.

It localises to the cytoplasm. Functionally, activator of cell division through the inhibition of FtsZ GTPase activity, therefore promoting FtsZ assembly into bundles of protofilaments necessary for the formation of the division Z ring. It is recruited early at mid-cell but it is not essential for cell division. In Cronobacter sakazakii (strain ATCC BAA-894) (Enterobacter sakazakii), this protein is Cell division protein ZapA.